A 393-amino-acid polypeptide reads, in one-letter code: Putative F-box/kelch-repeat protein At1g32430 (393 aa).

The F-box domain occupies 1-47 (MANKEKLPWDLEEEILSRVPPTSLDRFKTVCKRWNALFNDKTFINNH). Kelch repeat units lie at residues 151-199 (YMKD…NLSV) and 308-357 (WIYV…QVQF).

This is Putative F-box/kelch-repeat protein At1g32430 from Arabidopsis thaliana (Mouse-ear cress).